Consider the following 42-residue polypeptide: Photosystem II reaction center protein J (42 aa).

A helical transmembrane segment spans residues 10–30 (IPLWIIGTLAGTLVIGLLAIF).

The protein belongs to the PsbJ family. In terms of assembly, PSII is composed of 1 copy each of membrane proteins PsbA, PsbB, PsbC, PsbD, PsbE, PsbF, PsbH, PsbI, PsbJ, PsbK, PsbL, PsbM, PsbT, PsbX, PsbY, PsbZ, Psb30/Ycf12, at least 3 peripheral proteins of the oxygen-evolving complex and a large number of cofactors. It forms dimeric complexes.

The protein localises to the plastid. Its subcellular location is the chloroplast thylakoid membrane. In terms of biological role, one of the components of the core complex of photosystem II (PSII). PSII is a light-driven water:plastoquinone oxidoreductase that uses light energy to abstract electrons from H(2)O, generating O(2) and a proton gradient subsequently used for ATP formation. It consists of a core antenna complex that captures photons, and an electron transfer chain that converts photonic excitation into a charge separation. This chain is Photosystem II reaction center protein J, found in Chaetosphaeridium globosum (Charophycean green alga).